The following is an 827-amino-acid chain: DNA ligase (827 aa).

NAD(+) contacts are provided by residues 45–49 (DAAYD), 94–95 (SL), and E128. The active-site N6-AMP-lysine intermediate is the K130. Positions 151, 188, 304, and 328 each coordinate NAD(+). C451, C454, C475, and C481 together coordinate Zn(2+). The BRCT domain occupies 748 to 827 (AAAAAFSGRT…AEWLAMVEAA (80 aa)).

It belongs to the NAD-dependent DNA ligase family. LigA subfamily. It depends on Mg(2+) as a cofactor. The cofactor is Mn(2+).

It carries out the reaction NAD(+) + (deoxyribonucleotide)n-3'-hydroxyl + 5'-phospho-(deoxyribonucleotide)m = (deoxyribonucleotide)n+m + AMP + beta-nicotinamide D-nucleotide.. In terms of biological role, DNA ligase that catalyzes the formation of phosphodiester linkages between 5'-phosphoryl and 3'-hydroxyl groups in double-stranded DNA using NAD as a coenzyme and as the energy source for the reaction. It is essential for DNA replication and repair of damaged DNA. The sequence is that of DNA ligase from Methylobacterium sp. (strain 4-46).